Here is a 334-residue protein sequence, read N- to C-terminus: Ornithine carbamoyltransferase (334 aa).

Residues 57–60, Gln-84, Arg-108, and 135–138 each bind carbamoyl phosphate; these read STRT and HPTQ. Residues Asn-168, Asp-232, and 236–237 contribute to the L-ornithine site; that span reads SM. Carbamoyl phosphate contacts are provided by residues 274–275 and Arg-321; that span reads CL.

It belongs to the aspartate/ornithine carbamoyltransferase superfamily. OTCase family.

The protein resides in the cytoplasm. The enzyme catalyses carbamoyl phosphate + L-ornithine = L-citrulline + phosphate + H(+). It participates in amino-acid biosynthesis; L-arginine biosynthesis; L-arginine from L-ornithine and carbamoyl phosphate: step 1/3. Functionally, reversibly catalyzes the transfer of the carbamoyl group from carbamoyl phosphate (CP) to the N(epsilon) atom of ornithine (ORN) to produce L-citrulline. This Actinobacillus pleuropneumoniae serotype 5b (strain L20) protein is Ornithine carbamoyltransferase.